The chain runs to 251 residues: Flagellar brake protein YcgR (251 aa).

The region spanning 127–239 is the PilZ domain; sequence QRRDGFRVRP…ASRTLQRYID (113 aa).

The protein belongs to the YcgR family. As to quaternary structure, monomer. Interacts with the flagellar basal bodies.

It localises to the bacterial flagellum basal body. In terms of biological role, acts as a flagellar brake, regulating swimming and swarming in a bis-(3'-5') cyclic diguanylic acid (c-di-GMP)-dependent manner. Binds 1 c-di-GMP dimer per subunit. Increasing levels of c-di-GMP lead to decreased motility. The protein is Flagellar brake protein YcgR of Leptothrix cholodnii (strain ATCC 51168 / LMG 8142 / SP-6) (Leptothrix discophora (strain SP-6)).